The following is a 490-amino-acid chain: Cytochrome P450 2C50 (490 aa).

S127 carries the phosphoserine modification. N6-acetyllysine occurs at positions 249 and 375. C435 contributes to the heme binding site.

This sequence belongs to the cytochrome P450 family. The cofactor is heme. Expressed in heart and liver.

The protein localises to the endoplasmic reticulum membrane. It is found in the microsome membrane. The enzyme catalyses an organic molecule + reduced [NADPH--hemoprotein reductase] + O2 = an alcohol + oxidized [NADPH--hemoprotein reductase] + H2O + H(+). Metabolizes arachidonic acid to several midchain and omega-terminal hydroxyeicosatetraenoic acids (HETE). The polypeptide is Cytochrome P450 2C50 (Mus musculus (Mouse)).